A 513-amino-acid chain; its full sequence is Cytochrome P450 monooxygenase eqxH (513 aa).

The helical transmembrane segment at 13-32 (QYAILCGITVFTLFIVQLSL) threads the bilayer. 2 N-linked (GlcNAc...) asparagine glycosylation sites follow: Asn-130 and Asn-295. Cys-449 lines the heme pocket.

Belongs to the cytochrome P450 family. Heme serves as cofactor.

It is found in the membrane. The protein operates within mycotoxin biosynthesis. Cytochrome P450 monooxygenase; part of the gene cluster that mediates the biosynthesis of equisetin, a trans-fused decalin-containing tetramic acid with antimicrobial activity. The PKS module of eqxS together with the enoylreductase eqxC catalyze the formation of the polyketide unit which is then conjugated to L-serine by the condensation domain of the eqxS NRPS module. Activity of the Dieckmann cyclase domain (RED) results in release of the Dieckmann product intermediate. Diels-Alderase eqx3 is involved in endo-selective Diels-Alder cycloaddition to form the decalin ring, leading to the production of N-desmethylequisetin also called trichosetin. Subsequent N-methylation is carried out by eqxD to give equisetin. This chain is Cytochrome P450 monooxygenase eqxH, found in Fusarium heterosporum.